A 452-amino-acid chain; its full sequence is Gastrin/cholecystokinin type B receptor (452 aa).

Residues 1–21 are disordered; sequence MELLKLNRSVQGPGPGSGSSL. Over 1–57 the chain is Extracellular; that stretch reads MELLKLNRSVQGPGPGSGSSLCRPGVSLLNSSSAGNLSCDPPRIRGTGTRELEMAIR. N-linked (GlcNAc...) asparagine glycosylation is found at Asn7, Asn30, and Asn36. Residues 58 to 79 form a helical membrane-spanning segment; the sequence is ITLYAVIFLMSVGGNVLIIVVL. The Cytoplasmic segment spans residues 80 to 87; sequence GLSRRLRT. A helical transmembrane segment spans residues 88 to 109; the sequence is VTNAFLLSLAVSDLLLAVACMP. Topologically, residues 110–131 are extracellular; the sequence is FTLLPNLMGTFIFGTVICKAIS. Cys127 and Cys205 are disulfide-bonded. Residues 132–150 form a helical membrane-spanning segment; that stretch reads YLMGVSVSVSTLNLVAIAL. At 151 to 170 the chain is on the cytoplasmic side; it reads ERYSAICRPLQARVWQTRSH. The helical transmembrane segment at 171 to 189 threads the bilayer; it reads AARVILATWLLSGLLMVPY. At 190–219 the chain is on the extracellular side; the sequence is PVYTMVQPVGPRVLQCMHRWPSARVQQTWS. A helical transmembrane segment spans residues 220–242; sequence VLLLLLLFFIPGVVIAVAYGLIS. The Cytoplasmic portion of the chain corresponds to 243–338; the sequence is RELYLGLHFD…KLLAKKRVVR (96 aa). A disordered region spans residues 257 to 286; that stretch reads SETQSRARNQGGLPGGAAPGPVHQNGGCRP. A helical membrane pass occupies residues 339 to 360; the sequence is MLLVIVLLFFLCWLPVYSVNTW. At 361 to 378 the chain is on the extracellular side; the sequence is RAFDGPGAQRALSGAPIS. The helical transmembrane segment at 379–399 threads the bilayer; the sequence is FIHLLSYVSACVNPLVYCFMH. Residues 400-452 are Cytoplasmic-facing; the sequence is RRFRQACLDTCARCCPRPPRARPQPLPDEDPPTPSIASLSRLSYTTISTLGPG. A lipid anchor (S-palmitoyl cysteine) is attached at Cys413. The interval 421–452 is disordered; sequence RPQPLPDEDPPTPSIASLSRLSYTTISTLGPG. Residues 434-452 show a composition bias toward polar residues; the sequence is SIASLSRLSYTTISTLGPG.

This sequence belongs to the G-protein coupled receptor 1 family. As to expression, parietal cells, pancreas, brain and various neoplastic tissues.

It localises to the cell membrane. In terms of biological role, receptor for gastrin and cholecystokinin. The CCK-B receptors occur throughout the central nervous system where they modulate anxiety, analgesia, arousal, and neuroleptic activity. This receptor mediates its action by association with G proteins that activate a phosphatidylinositol-calcium second messenger system. The polypeptide is Gastrin/cholecystokinin type B receptor (Cckbr) (Rattus norvegicus (Rat)).